The sequence spans 82 residues: Small ribosomal subunit protein eS27B (82 aa).

The C4-type zinc finger occupies C37–C59.

This sequence belongs to the eukaryotic ribosomal protein eS27 family. In terms of assembly, component of the small ribosomal subunit (SSU). Mature yeast ribosomes consist of a small (40S) and a large (60S) subunit. The 40S small subunit contains 1 molecule of ribosomal RNA (18S rRNA) and 33 different proteins (encoded by 57 genes). The large 60S subunit contains 3 rRNA molecules (25S, 5.8S and 5S rRNA) and 46 different proteins (encoded by 81 genes). Zn(2+) is required as a cofactor. The N-terminus is not modified.

Its subcellular location is the cytoplasm. Component of the ribosome, a large ribonucleoprotein complex responsible for the synthesis of proteins in the cell. The small ribosomal subunit (SSU) binds messenger RNAs (mRNAs) and translates the encoded message by selecting cognate aminoacyl-transfer RNA (tRNA) molecules. The large subunit (LSU) contains the ribosomal catalytic site termed the peptidyl transferase center (PTC), which catalyzes the formation of peptide bonds, thereby polymerizing the amino acids delivered by tRNAs into a polypeptide chain. The nascent polypeptides leave the ribosome through a tunnel in the LSU and interact with protein factors that function in enzymatic processing, targeting, and the membrane insertion of nascent chains at the exit of the ribosomal tunnel. The protein is Small ribosomal subunit protein eS27B of Saccharomyces cerevisiae (strain ATCC 204508 / S288c) (Baker's yeast).